The primary structure comprises 621 residues: Chaperone protein HtpG (621 aa).

The interval 1–341 is a; substrate-binding; the sequence is MSNQEYTFQT…SEDLPLNVSR (341 aa). The tract at residues 342-547 is b; the sequence is EILQQNKILA…GDEQNAMMAN (206 aa). The tract at residues 548–621 is c; sequence WMRQMGQSVP…RLNSVLLKAL (74 aa).

The protein belongs to the heat shock protein 90 family. As to quaternary structure, homodimer.

The protein localises to the cytoplasm. Its function is as follows. Molecular chaperone. Has ATPase activity. This chain is Chaperone protein HtpG, found in Helicobacter pylori (strain ATCC 700392 / 26695) (Campylobacter pylori).